The primary structure comprises 297 residues: MEPRALVTALSLGLSLCSLGLLVTAIFTDHWYETDPRRHKESCERSRAGADPPDQKNRLMPLSHLPLRDSPPLGRRLLPGGPGRSDPESWRSLLGLGGLDAECGRPLFATYSGLWRKCYFLGIDRDIDTLILKGIAQRCTAVKYHFSQPIRLRNIPFNLTKIIQQDEWHLLHLRRITAGFLGMAVAVLLCGCIVATVSFFWEESLTQHVAGLLFLMTGIFCTISLCTYAASVSYDLNRVPKLIYSLPHDVEHGYSWSIFCAWCSLGFIVAAGGLCIAYPFISRTKIAHLKSGRDSTV.

An N-terminal signal peptide occupies residues 1–25 (MEPRALVTALSLGLSLCSLGLLVTA). Residues 26–179 (IFTDHWYETD…LLHLRRITAG (154 aa)) are Extracellular-facing. Residues 41–57 (ESCERSRAGADPPDQKN) show a composition bias toward basic and acidic residues. Residues 41–86 (ESCERSRAGADPPDQKNRLMPLSHLPLRDSPPLGRRLLPGGPGRSD) are disordered. Residues 68 to 79 (RDSPPLGRRLLP) are compositionally biased toward low complexity. An N-linked (GlcNAc...) asparagine glycan is attached at Asn158. Residues 180-200 (FLGMAVAVLLCGCIVATVSFF) traverse the membrane as a helical segment. At 201 to 208 (WEESLTQH) the chain is on the cytoplasmic side. The chain crosses the membrane as a helical span at residues 209-229 (VAGLLFLMTGIFCTISLCTYA). Residues 230 to 257 (ASVSYDLNRVPKLIYSLPHDVEHGYSWS) lie on the Extracellular side of the membrane. The helical transmembrane segment at 258-278 (IFCAWCSLGFIVAAGGLCIAY) threads the bilayer. Topologically, residues 279 to 297 (PFISRTKIAHLKSGRDSTV) are cytoplasmic.

The protein belongs to the TMEM178 family. As to quaternary structure, interacts with STIM1.

The protein localises to the endoplasmic reticulum membrane. Functionally, acts as a negative regulator of osteoclast differentiation in basal and inflammatory conditions by regulating TNFSF11-induced Ca (2+) fluxes, thereby controlling the induction of NFATC1. The polypeptide is Transmembrane protein 178A (Tmem178a) (Rattus norvegicus (Rat)).